We begin with the raw amino-acid sequence, 486 residues long: Protein nucleotidyltransferase YdiU (486 aa).

8 residues coordinate ATP: Gly90, Gly92, Arg93, Lys113, Asp125, Gly126, Arg176, and Arg183. Asp252 functions as the Proton acceptor in the catalytic mechanism. Asn253 and Asp262 together coordinate Mg(2+). Residue Asp262 coordinates ATP.

The protein belongs to the SELO family. Mg(2+) is required as a cofactor. Requires Mn(2+) as cofactor.

It carries out the reaction L-seryl-[protein] + ATP = 3-O-(5'-adenylyl)-L-seryl-[protein] + diphosphate. The catalysed reaction is L-threonyl-[protein] + ATP = 3-O-(5'-adenylyl)-L-threonyl-[protein] + diphosphate. The enzyme catalyses L-tyrosyl-[protein] + ATP = O-(5'-adenylyl)-L-tyrosyl-[protein] + diphosphate. It catalyses the reaction L-histidyl-[protein] + UTP = N(tele)-(5'-uridylyl)-L-histidyl-[protein] + diphosphate. It carries out the reaction L-seryl-[protein] + UTP = O-(5'-uridylyl)-L-seryl-[protein] + diphosphate. The catalysed reaction is L-tyrosyl-[protein] + UTP = O-(5'-uridylyl)-L-tyrosyl-[protein] + diphosphate. Nucleotidyltransferase involved in the post-translational modification of proteins. It can catalyze the addition of adenosine monophosphate (AMP) or uridine monophosphate (UMP) to a protein, resulting in modifications known as AMPylation and UMPylation. In Pseudomonas entomophila (strain L48), this protein is Protein nucleotidyltransferase YdiU.